The following is a 400-amino-acid chain: MAP kinase-activated protein kinase 2 (400 aa).

Positions 1 to 43 are disordered; sequence MLSNSQGQSPPVPFPAPAPPPQPPTPALPHPPAQPPPPPPQQF. Serine 9 is subject to Phosphoserine. A compositionally biased stretch (pro residues) spans 10 to 42; it reads PPVPFPAPAPPPQPPTPALPHPPAQPPPPPPQQ. Residue threonine 25 is modified to Phosphothreonine. A Protein kinase domain is found at 64-325; that stretch reads KVTSQVLGLG…ITEFMNHPWI (262 aa). ATP contacts are provided by residues 70-78 and lysine 93; that span reads LGLGINGKV. Staurosporine is bound at residue 139–141; that stretch reads ECL. Catalysis depends on aspartate 186, which acts as the Proton acceptor. A Phosphothreonine; by MAPK14 modification is found at threonine 222. Position 272 is a phosphoserine; by MAPK14 (serine 272). The residue at position 328 (serine 328) is a Phosphoserine; by autocatalysis. An autoinhibitory helix region spans residues 328 to 364; it reads STKVPQTPLHTSRVLKEDKERWEDVKEEMTSALATMR. Threonine 334 bears the Phosphothreonine; by MAPK14 mark. Lysine 353 is covalently cross-linked (Glycyl lysine isopeptide (Lys-Gly) (interchain with G-Cter in SUMO)). Residues 356–365 carry the Nuclear export signal (NES) motif; sequence MTSALATMRV. Positions 366–390 are p38 MAPK-binding site; it reads DYEQIKIKKIEDASNPLLLKRRKKA. Short sequence motifs (bipartite nuclear localization signal) lie at residues 371 to 374 and 385 to 389; these read KIKK and KRRKK.

It belongs to the protein kinase superfamily. CAMK Ser/Thr protein kinase family. Heterodimer with p38-alpha/MAPK14; this heterodimer forms a stable complex: molecules are positioned 'face to face' so that the ATP-binding sites of both kinases are at the heterodimer interface. Interacts with PHC2. Interacts with HSF1. Sumoylation inhibits the protein kinase activity. In terms of processing, phosphorylated and activated by MAP kinase p38-alpha/MAPK14 at Thr-222, Ser-272 and Thr-334. In terms of tissue distribution, expressed in all tissues examined.

It localises to the cytoplasm. It is found in the nucleus. It catalyses the reaction L-seryl-[protein] + ATP = O-phospho-L-seryl-[protein] + ADP + H(+). The catalysed reaction is L-threonyl-[protein] + ATP = O-phospho-L-threonyl-[protein] + ADP + H(+). Activated following phosphorylation by p38-alpha/MAPK14 following various stresses. Inhibited following sumoylation. Specifically inhibited by pyrrolopyridine inhibitors. Stress-activated serine/threonine-protein kinase involved in cytokine production, endocytosis, reorganization of the cytoskeleton, cell migration, cell cycle control, chromatin remodeling, DNA damage response and transcriptional regulation. Following stress, it is phosphorylated and activated by MAP kinase p38-alpha/MAPK14, leading to phosphorylation of substrates. Phosphorylates serine in the peptide sequence, Hyd-X-R-X(2)-S, where Hyd is a large hydrophobic residue. Phosphorylates ALOX5, CDC25B, CDC25C, CEP131, ELAVL1, HNRNPA0, HSP27/HSPB1, KRT18, KRT20, LIMK1, LSP1, PABPC1, PARN, PDE4A, RCSD1, RPS6KA3, TAB3 and TTP/ZFP36. Phosphorylates HSF1; leading to the interaction with HSP90 proteins and inhibiting HSF1 homotrimerization, DNA-binding and transactivation activities. Mediates phosphorylation of HSP27/HSPB1 in response to stress, leading to the dissociation of HSP27/HSPB1 from large small heat-shock protein (sHsps) oligomers and impairment of their chaperone activities and ability to protect against oxidative stress effectively. Involved in inflammatory response by regulating tumor necrosis factor (TNF) and IL6 production post-transcriptionally: acts by phosphorylating AU-rich elements (AREs)-binding proteins ELAVL1, HNRNPA0, PABPC1 and TTP/ZFP36, leading to the regulation of the stability and translation of TNF and IL6 mRNAs. Phosphorylation of TTP/ZFP36, a major post-transcriptional regulator of TNF, promotes its binding to 14-3-3 proteins and reduces its ARE mRNA affinity, leading to inhibition of dependent degradation of ARE-containing transcripts. Phosphorylates CEP131 in response to cellular stress induced by ultraviolet irradiation which promotes binding of CEP131 to 14-3-3 proteins and inhibits formation of novel centriolar satellites. Also involved in late G2/M checkpoint following DNA damage through a process of post-transcriptional mRNA stabilization: following DNA damage, relocalizes from nucleus to cytoplasm and phosphorylates HNRNPA0 and PARN, leading to stabilization of GADD45A mRNA. Involved in toll-like receptor signaling pathway (TLR) in dendritic cells: required for acute TLR-induced macropinocytosis by phosphorylating and activating RPS6KA3. The sequence is that of MAP kinase-activated protein kinase 2 (MAPKAPK2) from Homo sapiens (Human).